Here is a 118-residue protein sequence, read N- to C-terminus: Large ribosomal subunit protein bL20 (118 aa).

This sequence belongs to the bacterial ribosomal protein bL20 family.

Its function is as follows. Binds directly to 23S ribosomal RNA and is necessary for the in vitro assembly process of the 50S ribosomal subunit. It is not involved in the protein synthesizing functions of that subunit. The chain is Large ribosomal subunit protein bL20 from Ralstonia nicotianae (strain ATCC BAA-1114 / GMI1000) (Ralstonia solanacearum).